Reading from the N-terminus, the 503-residue chain is Maturase K (503 aa).

It belongs to the intron maturase 2 family. MatK subfamily.

The protein localises to the plastid. Its subcellular location is the chloroplast. In terms of biological role, usually encoded in the trnK tRNA gene intron. Probably assists in splicing its own and other chloroplast group II introns. The protein is Maturase K of Callistemon polandii (Gold-tipped bottlebrush).